Reading from the N-terminus, the 460-residue chain is Nuclear distribution protein PAC1 (460 aa).

One can recognise a LisH domain in the interval 9–41 (QAEELHKSIIAYLAANNLQDSANAMRTELGLGE). Residues 61–88 (TSVVRLQKKIMDLEAQTQTLQTELNSAT) are a coiled coil. The span at 82–92 (TELNSATPTSN) shows a compositional bias: polar residues. The interval 82–105 (TELNSATPTSNRRGDPSSWLPAGP) is disordered. WD repeat units lie at residues 112 to 153 (SHRT…RTVK), 155 to 195 (HTKA…QNIR), 199 to 246 (GHDH…CVKT), 249 to 288 (GHADWIRDVSPSLDGKYLLSTGNDRTVRLWDISVPNPEAK), 293 to 354 (GHEH…KTLI), 355 to 394 (GHDNWVRGLVFHPSGKFLLSVSDDKTIRCWDLSQEGKCVK), and 399 to 456 (SHEH…MSLR). The tract at residues 414 to 433 (IKDKGPGEETNGDVGTPKKA) is disordered.

It belongs to the WD repeat LIS1/nudF family. Self-associates. Interacts with NDL1 and dynein.

It localises to the cytoplasm. It is found in the cytoskeleton. The protein localises to the spindle pole. In terms of biological role, positively regulates the activity of the minus-end directed microtubule motor protein dynein. May enhance dynein-mediated microtubule sliding by targeting dynein to the microtubule plus end. Required for nuclear migration during vegetative growth as well as development. Required for retrograde early endosome (EE) transport from the hyphal tip. Required for localization of dynein to the mitotic spindle poles. Recruits additional proteins to the dynein complex at SPBs. This is Nuclear distribution protein PAC1 from Gibberella zeae (strain ATCC MYA-4620 / CBS 123657 / FGSC 9075 / NRRL 31084 / PH-1) (Wheat head blight fungus).